Reading from the N-terminus, the 239-residue chain is MPTLGVNIDHVATIRQARRTVEPDPAAAAVLVELAGADGITVHLREDRRHIQDRDVEILRRTVRTHLNLEMAATRAMVDFALDVRPDYVTLVPERREEVTTEGGLDVGGQIASVGLAVEQLQCAGIPVSLFVDPDAAQLQASARTGAKFVELHTGRYAEARGEQAQRSELAQLAAACDEAQALGLRVNAGHGLTYWNVAPVARLSGMEELNIGHSIIARAVLVGLERAVREMKQAMIAG.

Asn7 contributes to the 3-amino-2-oxopropyl phosphate binding site. Residue 9-10 (DH) participates in 1-deoxy-D-xylulose 5-phosphate binding. 3-amino-2-oxopropyl phosphate is bound at residue Arg18. His43 functions as the Proton acceptor in the catalytic mechanism. 1-deoxy-D-xylulose 5-phosphate is bound by residues Arg45 and His50. Glu70 serves as the catalytic Proton acceptor. Thr100 provides a ligand contact to 1-deoxy-D-xylulose 5-phosphate. Residue His191 is the Proton donor of the active site. Residues Gly192 and 213–214 (GH) each bind 3-amino-2-oxopropyl phosphate.

It belongs to the PNP synthase family. As to quaternary structure, homooctamer; tetramer of dimers.

It is found in the cytoplasm. The enzyme catalyses 3-amino-2-oxopropyl phosphate + 1-deoxy-D-xylulose 5-phosphate = pyridoxine 5'-phosphate + phosphate + 2 H2O + H(+). Its pathway is cofactor biosynthesis; pyridoxine 5'-phosphate biosynthesis; pyridoxine 5'-phosphate from D-erythrose 4-phosphate: step 5/5. Catalyzes the complicated ring closure reaction between the two acyclic compounds 1-deoxy-D-xylulose-5-phosphate (DXP) and 3-amino-2-oxopropyl phosphate (1-amino-acetone-3-phosphate or AAP) to form pyridoxine 5'-phosphate (PNP) and inorganic phosphate. In Gloeobacter violaceus (strain ATCC 29082 / PCC 7421), this protein is Pyridoxine 5'-phosphate synthase.